Here is a 61-residue protein sequence, read N- to C-terminus: Large ribosomal subunit protein uL30 (61 aa).

Belongs to the universal ribosomal protein uL30 family. Part of the 50S ribosomal subunit.

In Nitrosomonas eutropha (strain DSM 101675 / C91 / Nm57), this protein is Large ribosomal subunit protein uL30.